Consider the following 477-residue polypeptide: Cysteine protease ATG4b (477 aa).

The disordered stretch occupies residues 11-39 (SKCSSSSTSEKRDISSPTSLVSDSASSDN). A compositionally biased stretch (polar residues) spans 25–39 (SSPTSLVSDSASSDN). Cysteine 173 serves as the catalytic Nucleophile. Catalysis depends on residues aspartate 368 and histidine 370. The tract at residues 453 to 477 (AETSSSTETSTEISGEEHEDDWQLL) is disordered. Positions 454–465 (ETSSSTETSTEI) are enriched in low complexity.

This sequence belongs to the peptidase C54 family. As to quaternary structure, interacts with ATG8a and ATG8d. Constitutively expressed.

Its subcellular location is the cytoplasm. The enzyme catalyses [protein]-C-terminal L-amino acid-glycyl-phosphatidylethanolamide + H2O = [protein]-C-terminal L-amino acid-glycine + a 1,2-diacyl-sn-glycero-3-phosphoethanolamine. Functionally, cysteine protease that plays a key role in autophagy by mediating both proteolytic activation and delipidation of ATG8 family proteins. The protease activity is required for proteolytic activation of ATG8 family proteins: cleaves the C-terminal amino acid of ATG8 proteins to reveal a C-terminal glycine. Exposure of the glycine at the C-terminus is essential for ATG8 proteins conjugation to phosphatidylethanolamine (PE) and insertion to membranes, which is necessary for autophagy. In addition to the protease activity, also mediates delipidation of PE-conjugated ATG8 proteins. In Arabidopsis thaliana (Mouse-ear cress), this protein is Cysteine protease ATG4b.